The primary structure comprises 239 residues: Ribonuclease PH (239 aa).

Residues R86 and 124-126 (GTR) contribute to the phosphate site.

This sequence belongs to the RNase PH family. Homohexameric ring arranged as a trimer of dimers.

It carries out the reaction tRNA(n+1) + phosphate = tRNA(n) + a ribonucleoside 5'-diphosphate. In terms of biological role, phosphorolytic 3'-5' exoribonuclease that plays an important role in tRNA 3'-end maturation. Removes nucleotide residues following the 3'-CCA terminus of tRNAs; can also add nucleotides to the ends of RNA molecules by using nucleoside diphosphates as substrates, but this may not be physiologically important. Probably plays a role in initiation of 16S rRNA degradation (leading to ribosome degradation) during starvation. This Azoarcus sp. (strain BH72) protein is Ribonuclease PH.